Reading from the N-terminus, the 216-residue chain is Ribosomal RNA large subunit methyltransferase E (216 aa).

S-adenosyl-L-methionine contacts are provided by glycine 71, tryptophan 73, aspartate 88, aspartate 104, and aspartate 126. The active-site Proton acceptor is the lysine 166.

Belongs to the class I-like SAM-binding methyltransferase superfamily. RNA methyltransferase RlmE family.

The protein localises to the cytoplasm. The catalysed reaction is uridine(2552) in 23S rRNA + S-adenosyl-L-methionine = 2'-O-methyluridine(2552) in 23S rRNA + S-adenosyl-L-homocysteine + H(+). Specifically methylates the uridine in position 2552 of 23S rRNA at the 2'-O position of the ribose in the fully assembled 50S ribosomal subunit. This chain is Ribosomal RNA large subunit methyltransferase E, found in Wolbachia sp. subsp. Brugia malayi (strain TRS).